A 54-amino-acid polypeptide reads, in one-letter code: Photosystem II reaction center protein K (54 aa).

Positions 1-17 are excised as a propeptide; it reads MFQISLDMISNKINLLG. A helical membrane pass occupies residues 29 to 49; that stretch reads IVDVLPIIPILFFLLAFVWQA.

The protein belongs to the PsbK family. In terms of assembly, PSII is composed of 1 copy each of membrane proteins PsbA, PsbB, PsbC, PsbD, PsbE, PsbF, PsbH, PsbI, PsbJ, PsbK, PsbL, PsbM, PsbT, PsbY, PsbZ, Psb30/Ycf12, at least 3 peripheral proteins of the oxygen-evolving complex and a large number of cofactors. It forms dimeric complexes.

Its subcellular location is the plastid. It localises to the chloroplast thylakoid membrane. Functionally, one of the components of the core complex of photosystem II (PSII). PSII is a light-driven water:plastoquinone oxidoreductase that uses light energy to abstract electrons from H(2)O, generating O(2) and a proton gradient subsequently used for ATP formation. It consists of a core antenna complex that captures photons, and an electron transfer chain that converts photonic excitation into a charge separation. In Euglena stellata, this protein is Photosystem II reaction center protein K.